The chain runs to 457 residues: UDP-N-acetylmuramate--L-alanine ligase (457 aa).

109–115 (GTDGKTT) lines the ATP pocket.

The protein belongs to the MurCDEF family.

The protein resides in the cytoplasm. It carries out the reaction UDP-N-acetyl-alpha-D-muramate + L-alanine + ATP = UDP-N-acetyl-alpha-D-muramoyl-L-alanine + ADP + phosphate + H(+). It participates in cell wall biogenesis; peptidoglycan biosynthesis. Cell wall formation. The polypeptide is UDP-N-acetylmuramate--L-alanine ligase (Thermotoga petrophila (strain ATCC BAA-488 / DSM 13995 / JCM 10881 / RKU-1)).